Consider the following 73-residue polypeptide: Gas vesicle protein A (73 aa).

Belongs to the gas vesicle GvpA family. The gas vesicle shell is 2 nm thick and consists of a single layer of this protein. It forms helical ribs nearly perpendicular to the long axis of the vesicle.

It localises to the gas vesicle shell. In terms of biological role, gas vesicles are hollow, gas filled proteinaceous nanostructures found in some microorganisms. During planktonic growth they allow positioning of the organism at a favorable depth for light or nutrient acquisition. GvpA forms the protein shell. This chain is Gas vesicle protein A, found in Nostoc punctiforme (strain ATCC 29133 / PCC 73102).